The sequence spans 885 residues: Ankyrin repeat and SAM domain-containing protein 6 (885 aa).

10 ANK repeats span residues 8–37 (PGLQ…EPVA), 68–97 (AGNS…SVNS), 101–130 (YGWS…DVNA), 134–163 (LGAS…TVDH), 181–210 (LGIT…DPNH), 215–244 (VGWS…NPDH), 282–312 (KRRP…HVNL), 316–345 (DGAT…DMNK), 350–379 (HGWT…DVTL), and 383–414 (NGYT…QVNK). Asn129 is subject to 3-hydroxyasparagine. Disordered regions lie at residues 415–439 (DRGG…SIPM), 491–522 (MRAP…PRRE), 563–775 (SSDR…ITDE), and 855–885 (FESS…SSRR). The span at 608-640 (PSISRSPTSPASSGNFNHSPHSSGGASGVGSMS) shows a compositional bias: low complexity. Ser650 bears the Phosphoserine mark. Residues 650 to 662 (SGGSVDSVLSQIA) show a composition bias toward polar residues. 2 stretches are compositionally biased toward low complexity: residues 689–713 (GSSP…TSSS) and 722–739 (PPSG…TLTP). A phosphoserine mark is found at Ser734 and Ser742. The span at 750–770 (SSVSSSSSHRQSKSSGGSSSG) shows a compositional bias: low complexity. Residues 773–836 (TDEDELTGIL…LAAISELNAG (64 aa)) form the SAM domain. Residues 855-865 (FESSASNTRAP) are compositionally biased toward polar residues. Residues 876-885 (RPEETVSSRR) are compositionally biased toward basic and acidic residues.

In terms of assembly, homooligomer. Interacts with NEK8. Central component of a complex containing at least ANKS6, INVS, NEK8 and NPHP3. ANKS6 may organize complex assembly by linking INVS and NPHP3 to NEK8 and INVS may target the complex to the proximal ciliary axoneme. Interacts (via SAM domain) with BICC1 (via KH domains) in an RNA-dependent manner. Interacts (via SAM domain) with ANKS3 (via SAM domain). In terms of processing, hydroxylated at Asn-129, most probably by HIF1AN. This hydroxylation results in decreased NEK8-binding. As to expression, widely expressed with moderate level in brain, skeletal muscle and testis. Expressed in renal tubules.

The protein resides in the cell projection. Its subcellular location is the cilium. It is found in the cytoplasm. In terms of biological role, required for renal function. This is Ankyrin repeat and SAM domain-containing protein 6 (Anks6) from Rattus norvegicus (Rat).